Consider the following 389-residue polypeptide: Lipid-A-disaccharide synthase (389 aa).

The protein belongs to the LpxB family.

The catalysed reaction is a lipid X + a UDP-2-N,3-O-bis[(3R)-3-hydroxyacyl]-alpha-D-glucosamine = a lipid A disaccharide + UDP + H(+). The protein operates within bacterial outer membrane biogenesis; LPS lipid A biosynthesis. Condensation of UDP-2,3-diacylglucosamine and 2,3-diacylglucosamine-1-phosphate to form lipid A disaccharide, a precursor of lipid A, a phosphorylated glycolipid that anchors the lipopolysaccharide to the outer membrane of the cell. The chain is Lipid-A-disaccharide synthase from Burkholderia cenocepacia (strain HI2424).